A 125-amino-acid polypeptide reads, in one-letter code: Large ribosomal subunit protein bL12 (125 aa).

The protein belongs to the bacterial ribosomal protein bL12 family. As to quaternary structure, homodimer. Part of the ribosomal stalk of the 50S ribosomal subunit. Forms a multimeric L10(L12)X complex, where L10 forms an elongated spine to which 2 to 4 L12 dimers bind in a sequential fashion. Binds GTP-bound translation factors.

Forms part of the ribosomal stalk which helps the ribosome interact with GTP-bound translation factors. Is thus essential for accurate translation. This chain is Large ribosomal subunit protein bL12, found in Gluconobacter oxydans (strain 621H) (Gluconobacter suboxydans).